We begin with the raw amino-acid sequence, 354 residues long: 5,10-methenyltetrahydromethanopterin hydrogenase (354 aa).

This sequence belongs to the HMD family.

The enzyme catalyses 5,10-methenyl-5,6,7,8-tetrahydromethanopterin + H2 = 5,10-methylenetetrahydromethanopterin + H(+). It functions in the pathway one-carbon metabolism; methanogenesis from CO(2); 5,10-methylene-5,6,7,8-tetrahydromethanopterin from 5,10-methenyl-5,6,7,8-tetrahydromethanopterin (hydrogen route): step 1/1. Catalyzes the reversible reduction of methenyl-H(4)MPT(+) to methylene-H(4)MPT. This is 5,10-methenyltetrahydromethanopterin hydrogenase from Methanococcus vannielii (strain ATCC 35089 / DSM 1224 / JCM 13029 / OCM 148 / SB).